We begin with the raw amino-acid sequence, 245 residues long: Phosphoribosylaminoimidazole-succinocarboxamide synthase (245 aa).

It belongs to the SAICAR synthetase family.

It catalyses the reaction 5-amino-1-(5-phospho-D-ribosyl)imidazole-4-carboxylate + L-aspartate + ATP = (2S)-2-[5-amino-1-(5-phospho-beta-D-ribosyl)imidazole-4-carboxamido]succinate + ADP + phosphate + 2 H(+). It participates in purine metabolism; IMP biosynthesis via de novo pathway; 5-amino-1-(5-phospho-D-ribosyl)imidazole-4-carboxamide from 5-amino-1-(5-phospho-D-ribosyl)imidazole-4-carboxylate: step 1/2. This Nostoc sp. (strain PCC 7120 / SAG 25.82 / UTEX 2576) protein is Phosphoribosylaminoimidazole-succinocarboxamide synthase.